Reading from the N-terminus, the 677-residue chain is DNA ligase (677 aa).

NAD(+) is bound by residues 34–38 (DAEYD), 83–84 (SL), and Glu117. Lys119 functions as the N6-AMP-lysine intermediate in the catalytic mechanism. NAD(+) contacts are provided by Arg140, Glu175, Lys283, and Lys307. Zn(2+) contacts are provided by Cys401, Cys404, Cys419, and Cys425. The BRCT domain maps to 594–677 (SHLSLLHGKT…QYISPNTNEN (84 aa)).

This sequence belongs to the NAD-dependent DNA ligase family. LigA subfamily. Mg(2+) serves as cofactor. Mn(2+) is required as a cofactor.

The enzyme catalyses NAD(+) + (deoxyribonucleotide)n-3'-hydroxyl + 5'-phospho-(deoxyribonucleotide)m = (deoxyribonucleotide)n+m + AMP + beta-nicotinamide D-nucleotide.. Its function is as follows. DNA ligase that catalyzes the formation of phosphodiester linkages between 5'-phosphoryl and 3'-hydroxyl groups in double-stranded DNA using NAD as a coenzyme and as the energy source for the reaction. It is essential for DNA replication and repair of damaged DNA. The protein is DNA ligase of Ehrlichia canis (strain Jake).